We begin with the raw amino-acid sequence, 246 residues long: MMTENREQSPSYKRVLLKVSGEALMGDGPSGVDPVMVDMVAADIADVVASGVEVCLVVGGGNIFRGLAAAAKGMDRAQGDYAGMLATVINALMLQNALERRGMETRVMTAIQMAAIAEPYIRRRAVRHMEKGRVVIFAAGTGNPFFTTDTAAALRANEMECDALFKGTQVDGVYSADPRRNPDAERYDQLTYLEVLARDLNVMDAAAISLARENKLPIVVFNMHAPGSFGAVMRGEGLFTKIIEAD.

18–21 (KVSG) is a binding site for ATP. UMP is bound at residue Gly-60. Residues Gly-61 and Arg-65 each coordinate ATP. Residues Asp-80 and 141–148 (TGNPFFTT) contribute to the UMP site. Positions 168, 169, 174, and 177 each coordinate ATP.

This sequence belongs to the UMP kinase family. Homohexamer.

Its subcellular location is the cytoplasm. The enzyme catalyses UMP + ATP = UDP + ADP. It participates in pyrimidine metabolism; CTP biosynthesis via de novo pathway; UDP from UMP (UMPK route): step 1/1. Inhibited by UTP. Catalyzes the reversible phosphorylation of UMP to UDP. The sequence is that of Uridylate kinase from Gluconobacter oxydans (strain 621H) (Gluconobacter suboxydans).